Reading from the N-terminus, the 475-residue chain is Adenylyl cyclase-associated protein 1 (475 aa).

An N-acetylalanine modification is found at alanine 2. Tyrosine 31 is modified (phosphotyrosine). At serine 34 the chain carries Phosphoserine. N6-acetyllysine is present on lysine 81. Disordered stretches follow at residues glutamate 216–serine 255 and methionine 278–glutamate 318. Low complexity predominate over residues serine 218 to serine 228. A compositionally biased stretch (pro residues) spans glycine 229–valine 242. A compositionally biased stretch (low complexity) spans serine 243–serine 255. Lysine 287 carries the post-translational modification N6-methyllysine. A phosphoserine mark is found at serine 290, serine 295, and serine 301. The residue at position 307 (threonine 307) is a Phosphothreonine. Residues serine 308 and serine 310 each carry the phosphoserine modification. One can recognise a C-CAP/cofactor C-like domain in the interval proline 313 to valine 453. A Glycyl lysine isopeptide (Lys-Gly) (interchain with G-Cter in SUMO1) cross-link involves residue lysine 348.

The protein belongs to the CAP family. As to quaternary structure, homodimer. Binds actin monomers.

It is found in the cell membrane. Functionally, directly regulates filament dynamics and has been implicated in a number of complex developmental and morphological processes, including mRNA localization and the establishment of cell polarity. The sequence is that of Adenylyl cyclase-associated protein 1 (CAP1) from Pongo abelii (Sumatran orangutan).